Reading from the N-terminus, the 585-residue chain is A-type ATP synthase subunit A (585 aa).

Positions 192-211 (MRQEWPVREPRPTVEKKTPR) are disordered. The segment covering 196-211 (WPVREPRPTVEKKTPR) has biased composition (basic and acidic residues). 237–244 (GPFGSGKT) is a binding site for ATP.

Belongs to the ATPase alpha/beta chains family. As to quaternary structure, has multiple subunits with at least A(3), B(3), C, D, E, F, H, I and proteolipid K(x).

Its subcellular location is the cell membrane. It catalyses the reaction ATP + H2O + 4 H(+)(in) = ADP + phosphate + 5 H(+)(out). Its function is as follows. Component of the A-type ATP synthase that produces ATP from ADP in the presence of a proton gradient across the membrane. The A chain is the catalytic subunit. In Haloquadratum walsbyi (strain DSM 16790 / HBSQ001), this protein is A-type ATP synthase subunit A.